Reading from the N-terminus, the 300-residue chain is 4-hydroxy-tetrahydrodipicolinate synthase (300 aa).

Pyruvate is bound at residue Thr55. Tyr143 (proton donor/acceptor) is an active-site residue. The active-site Schiff-base intermediate with substrate is the Lys171. Ile211 is a binding site for pyruvate.

Belongs to the DapA family. As to quaternary structure, homotetramer; dimer of dimers.

The protein resides in the cytoplasm. It catalyses the reaction L-aspartate 4-semialdehyde + pyruvate = (2S,4S)-4-hydroxy-2,3,4,5-tetrahydrodipicolinate + H2O + H(+). It functions in the pathway amino-acid biosynthesis; L-lysine biosynthesis via DAP pathway; (S)-tetrahydrodipicolinate from L-aspartate: step 3/4. Its function is as follows. Catalyzes the condensation of (S)-aspartate-beta-semialdehyde [(S)-ASA] and pyruvate to 4-hydroxy-tetrahydrodipicolinate (HTPA). The chain is 4-hydroxy-tetrahydrodipicolinate synthase from Mycobacterium bovis (strain ATCC BAA-935 / AF2122/97).